The sequence spans 145 residues: Aminoglycoside N(6')-acetyltransferase type 1 (145 aa).

Residues 1 to 145 form the N-acetyltransferase domain; it reads MDIRQMNKTH…ERVIFYRKRC (145 aa). Positions 22, 25, 66, and 79 each coordinate substrate. Residues 81 to 83 and 89 to 94 each bind acetyl-CoA; these read IFV and QRGVAK. D115 serves as a coordination point for substrate. N120 lines the acetyl-CoA pocket. A substrate-binding site is contributed by E136.

Homodimer.

The enzyme catalyses kanamycin B + acetyl-CoA = N(6')-acetylkanamycin B + CoA + H(+). Functionally, catalyzes the transfer of an acetyl group from acetyl-CoA to the 6'-amino group of aminoglycoside molecules conferring resistance to antibiotics containing the purpurosamine ring including amikacin, tobramycin, dibekacin and ribostamycin. Able to acetylate eukaryotic histone proteins. This Salmonella enteritidis protein is Aminoglycoside N(6')-acetyltransferase type 1.